Reading from the N-terminus, the 80-residue chain is Caltrin (80 aa).

The first 32 residues, 1 to 32 (MMAGRRSWPAMATVLLALLVCLGELVDSKPQP), serve as a signal peptide directing secretion.

In terms of biological role, inhibits calcium transport into spermatozoa; it does not bind directly to calcium. Binds to calmodulin. Inhibits the growth of microorganisms. Seem to act as an antibiotic by permeabilizing the bacterial membrane. The polypeptide is Caltrin (PYY2) (Bos taurus (Bovine)).